The sequence spans 263 residues: Interleukin-15 receptor subunit alpha (263 aa).

Positions 1-32 (MASPQLRGYGVQAIPVLLLLLLLLLLPLRVTP) are cleaved as a signal peptide. The Extracellular portion of the chain corresponds to 33–205 (GTTCPPPVSI…ISPHSSKMTK (173 aa)). Residues 34–98 (TTCPPPVSIE…WTTPSLKCIR (65 aa)) enclose the Sushi domain. 2 disulfides stabilise this stretch: cysteine 36/cysteine 78 and cysteine 62/cysteine 96. An N-linked (GlcNAc...) asparagine glycan is attached at asparagine 51. A compositionally biased stretch (low complexity) spans 113–135 (TPKVTSQPESPSPSAKEPEAFSP). Positions 113-178 (TPKVTSQPES…HKSSRAPSLA (66 aa)) are disordered. Positions 136-145 (KSDTAMTTET) are enriched in polar residues. The segment covering 154-169 (TPSQTTSAGTTGTGSH) has biased composition (low complexity). Residues 206-226 (VAISTSVLLVGAGVVMAFLAW) form a helical membrane-spanning segment. The Cytoplasmic portion of the chain corresponds to 227-263 (YIKSRQPSQPCRVEVETMETVPMTVRASSKEDEDTGA).

In terms of assembly, the interleukin-15 receptor IL15R is a heterotrimer of IL15RA, IL2RB and IL2RG. IL15RA also self-associates. Interacts with SYK. In terms of processing, N-glycosylated and O-glycosylated. Post-translationally, a soluble form (sIL-15RA) arises from proteolytic shedding of the membrane-anchored receptor. It also binds IL15 and thus interferes with IL15 binding to the membrane receptor. In terms of tissue distribution, widely expressed.

It localises to the membrane. The protein localises to the nucleus membrane. It is found in the cell surface. Its subcellular location is the secreted. The protein resides in the extracellular space. Its function is as follows. High-affinity receptor for interleukin-15. Can signal both in cis and trans where IL15R from one subset of cells presents IL15 to neighboring IL2RG-expressing cells. In neutrophils, binds and activates kinase SYK in response to IL15 stimulation. In neutrophils, required for IL15-induced phagocytosis in a SYK-dependent manner. This is Interleukin-15 receptor subunit alpha (Il15ra) from Mus musculus (Mouse).